Reading from the N-terminus, the 241-residue chain is Triosephosphate isomerase (241 aa).

Substrate is bound at residue 9-11 (NWK). Histidine 96 serves as the catalytic Electrophile. Glutamate 165 serves as the catalytic Proton acceptor. Substrate is bound by residues glycine 171, serine 204, and 225 to 226 (GG).

The protein belongs to the triosephosphate isomerase family. Homodimer.

Its subcellular location is the cytoplasm. The enzyme catalyses D-glyceraldehyde 3-phosphate = dihydroxyacetone phosphate. The protein operates within carbohydrate biosynthesis; gluconeogenesis. It participates in carbohydrate degradation; glycolysis; D-glyceraldehyde 3-phosphate from glycerone phosphate: step 1/1. Its function is as follows. Involved in the gluconeogenesis. Catalyzes stereospecifically the conversion of dihydroxyacetone phosphate (DHAP) to D-glyceraldehyde-3-phosphate (G3P). In Gloeothece citriformis (strain PCC 7424) (Cyanothece sp. (strain PCC 7424)), this protein is Triosephosphate isomerase.